The chain runs to 443 residues: Protein king tubby (443 aa).

Disordered stretches follow at residues 57-80 and 98-191; these read TNGS…NNMR and HELE…EGDV. The segment covering 68 to 80 has biased composition (polar residues); sequence AMNTSRNHSNNMR. Low complexity predominate over residues 113-128; that stretch reads QHQQSASHSANSTQSQ. At serine 136 the chain carries Phosphoserine. The span at 177 to 186 shows a compositional bias: gly residues; sequence NGTGNGTGGE.

Belongs to the TUB family.

The protein localises to the cytoplasm. Its subcellular location is the nucleus. The protein resides in the cell projection. It localises to the cilium membrane. It is found in the rhabdomere. The chain is Protein king tubby from Drosophila simulans (Fruit fly).